The chain runs to 369 residues: C-C chemokine receptor type 9 (369 aa).

Over 1-48 (MMPTELTSLIPGMFDDFSYDSTASTDDYMNLNFSSFFCKKNNVRQFAS) the chain is Extracellular. Residue asparagine 32 is glycosylated (N-linked (GlcNAc...) asparagine). 2 disulfide bridges follow: cysteine 38/cysteine 289 and cysteine 119/cysteine 198. Residues 49–74 (HFLPPLYWLVFIVGTLGNSLVILVYW) traverse the membrane as a helical segment. Over 75-85 (YCTRVKTMTDM) the chain is Cytoplasmic. A helical transmembrane segment spans residues 86–109 (FLLNLAIADLLFLATLPFWAIAAA). The Extracellular segment spans residues 110 to 120 (GQWMFQTFMCK). Residues 121 to 150 (VVNSMYKMNFYSCVLLIMCISVDRYIAIVQ) traverse the membrane as a helical segment. At 151-159 (AMKAQVWRQ) the chain is on the cytoplasmic side. Residues 160 to 185 (KRLLYSKMVCITIWVMAAVLCTPEIL) form a helical membrane-spanning segment. The Extracellular portion of the chain corresponds to 186-208 (YSQVSGESGIATCTMVYPKDKNA). Residues 209 to 243 (KLKSAVLILKVTLGFFLPFMVMAFCYTIIIHTLVQ) traverse the membrane as a helical segment. The Cytoplasmic portion of the chain corresponds to 244 to 248 (AKKSS). A helical transmembrane segment spans residues 249–283 (KHKALKVTITVLTVFIMSQFPYNSILVVQAVDAYA). Residues 284-290 (MFISNCT) lie on the Extracellular side of the membrane. Residues 291-321 (ISTNIDICFQVTQTIAFFHSCLNPVLYVFVG) form a helical membrane-spanning segment. At 322 to 369 (ERFRRDLVKTLKNLGCISQAQWVSFTRREGSLKLSSMLLETTSGALSL) the chain is on the cytoplasmic side.

This sequence belongs to the G-protein coupled receptor 1 family. As to expression, highly expressed in the thymus and low in lymph nodes and spleen.

It is found in the cell membrane. In terms of biological role, receptor for chemokine SCYA25/TECK. Subsequently transduces a signal by increasing the intracellular calcium ions level. The polypeptide is C-C chemokine receptor type 9 (Ccr9) (Mus musculus (Mouse)).